Here is a 649-residue protein sequence, read N- to C-terminus: Cysteine-rich receptor-like protein kinase 2 (649 aa).

Residues 1-29 (MKKEPVHILPLYLPCLLMFLLSSLRQITG) form the signal peptide. Residues 30–258 (DARARAVKVT…IPRNGRSRGS (229 aa)) lie on the Extracellular side of the membrane. Gnk2-homologous domains follow at residues 33-134 (ARAV…NYSF) and 139-245 (KGPE…DQDF). N-linked (GlcNAc...) asparagine glycans are attached at residues N47, N131, N149, N154, and N214. The helical transmembrane segment at 259-279 (VVVIVVSVLSSVVVFMIGVAV) threads the bilayer. The Cytoplasmic portion of the chain corresponds to 280–649 (SVYICKRRTI…TVSQSSFYGR (370 aa)). The Protein kinase domain occupies 325-608 (FDNANKLGQG…HMLKNKEEVL (284 aa)). Residues 331-339 (LGQGGFGTV) and K353 contribute to the ATP site. Y398 carries the post-translational modification Phosphotyrosine. The Proton acceptor role is filled by D450. S454 and S483 each carry phosphoserine. Residues T484 and T489 each carry the phosphothreonine modification. Y497 carries the post-translational modification Phosphotyrosine.

Belongs to the protein kinase superfamily. Ser/Thr protein kinase family. CRK subfamily.

The protein resides in the membrane. The catalysed reaction is L-seryl-[protein] + ATP = O-phospho-L-seryl-[protein] + ADP + H(+). It carries out the reaction L-threonyl-[protein] + ATP = O-phospho-L-threonyl-[protein] + ADP + H(+). The polypeptide is Cysteine-rich receptor-like protein kinase 2 (CRK2) (Arabidopsis thaliana (Mouse-ear cress)).